Consider the following 475-residue polypeptide: Putative poly(A) polymerase catalytic subunit (475 aa).

It belongs to the poxviridae poly(A) polymerase catalytic subunit family. Highly divergent.

It localises to the virion. The enzyme catalyses RNA(n) + ATP = RNA(n)-3'-adenine ribonucleotide + diphosphate. Its function is as follows. Polymerase that creates the 3'-poly(A) tail of mRNAs. The chain is Putative poly(A) polymerase catalytic subunit from Ornithodoros (relapsing fever ticks).